The chain runs to 274 residues: tRNA dimethylallyltransferase (274 aa).

An interaction with substrate tRNA region spans residues 9–12 (DSLS).

It belongs to the IPP transferase family. In terms of assembly, monomer. It depends on Mg(2+) as a cofactor.

The enzyme catalyses adenosine(37) in tRNA + dimethylallyl diphosphate = N(6)-dimethylallyladenosine(37) in tRNA + diphosphate. Its function is as follows. Catalyzes the transfer of a dimethylallyl group onto the adenine at position 37 in tRNAs that read codons beginning with uridine, leading to the formation of N6-(dimethylallyl)adenosine (i(6)A). The protein is tRNA dimethylallyltransferase (miaA) of Helicobacter pylori (strain P12).